We begin with the raw amino-acid sequence, 224 residues long: Transmembrane emp24 domain-containing protein 7 (224 aa).

Residues 1–34 form the signal peptide; the sequence is MPRPGSAQRWAAVAGRWGCRLLALLLLVPGPGGA. Residues 35–187 are Lumenal-facing; sequence SEITFELPDN…RAEDLNTRVA (153 aa). A GOLD domain is found at 46–128; that stretch reads KQCFYEDIAQ…HKTVYFDFQV (83 aa). Asn103 carries an N-linked (GlcNAc...) asparagine glycan. Residues 188-208 form a helical membrane-spanning segment; the sequence is YWSVGEALILLVVSIGQVFLL. Residues 209 to 224 lie on the Cytoplasmic side of the membrane; sequence KSFFSDKRTTTTRVGS. The short motif at 211–212 is the COPII vesicle coat-binding element; sequence FF. The short motif at 211-224 is the COPI vesicle coat-binding element; sequence FFSDKRTTTTRVGS.

This sequence belongs to the EMP24/GP25L family. Predominantly monomeric and to lesser extent homodimeric in endoplasmic reticulum, endoplasmic reticulum-Golgi intermediate compartment and cis-Golgi network. Oligomerizes with other members of the EMP24/GP25L family such as TMED2, TMED9 and TMED10. Interacts (via C-terminus) with COPG1; the interaction involves dimeric TMED7. Post-translationally, N-linked glycosylated in complex form containing terminal sialic acid.

It localises to the endoplasmic reticulum membrane. The protein resides in the golgi apparatus. Its subcellular location is the cis-Golgi network membrane. The protein localises to the endoplasmic reticulum-Golgi intermediate compartment membrane. It is found in the cytoplasmic vesicle. It localises to the COPI-coated vesicle membrane. The protein resides in the COPII-coated vesicle membrane. Its function is as follows. Potential role in vesicular protein trafficking, mainly in the early secretory pathway. Appears to play a role in the biosynthesis of secreted cargo including processing and post-translational modifications. The chain is Transmembrane emp24 domain-containing protein 7 (TMED7) from Homo sapiens (Human).